The chain runs to 210 residues: T-cell antigen CD7 (210 aa).

The first 23 residues, 1-23 (MTQQAVLALLLTLAGILPGPLDA), serve as a signal peptide directing secretion. The Ig-like domain occupies 24–129 (QDVHQSPRLT…RGLFTTVVVK (106 aa)). Residues 24-150 (QDVHQSPRLT…EPLQTSFSFP (127 aa)) are Extracellular-facing. Residues asparagine 42, asparagine 86, and asparagine 93 are each glycosylated (N-linked (GlcNAc...) asparagine). The cysteines at positions 45 and 111 are disulfide-linked. The chain crosses the membrane as a helical span at residues 151–171 (AAIAVGFFFTGLLLGVVCSML). Cysteine 168 carries S-palmitoyl cysteine lipidation. The Cytoplasmic portion of the chain corresponds to 172–210 (RKIQIKKLCASGIKESPCVVYEDMSYSNRKTPCIPNQYQ).

Interacts with SECTM1.

The protein resides in the membrane. In terms of biological role, transmembrane glycoprotein expressed by T-cells and natural killer (NK) cells and their precursors. Plays a costimulatory role in T-cell activation upon binding to its ligand K12/SECTM1. In turn, mediates the production of cytokines such as IL-2. On resting NK-cells, CD7 activation results in a significant induction of gamma-interferon levels. The sequence is that of T-cell antigen CD7 (Cd7) from Mus musculus (Mouse).